A 1778-amino-acid chain; its full sequence is Protein TIC 214 (1778 aa).

6 helical membrane passes run 18–38, 67–87, 90–110, 132–152, 175–195, and 226–246; these read IINS…FSIG, FIAG…HLAL, PHTI…WNNN, VFLN…SSML, VGWL…LVWI, and IFSI…PSPI. A disordered region spans residues 1498–1520; that stretch reads GQGELESDNEKKRNPESALSNQE.

The protein belongs to the TIC214 family. In terms of assembly, part of the Tic complex.

It localises to the plastid. It is found in the chloroplast inner membrane. Its function is as follows. Involved in protein precursor import into chloroplasts. May be part of an intermediate translocation complex acting as a protein-conducting channel at the inner envelope. This Arabis hirsuta (Hairy rock-cress) protein is Protein TIC 214.